The sequence spans 183 residues: Ferredoxin-2, mitochondrial (183 aa).

Residues 1–52 (MAASVAWGGVNAGFLLRAARGAWWSRPGGFWGSGEAAAPAIARKFRATGSRP) constitute a mitochondrion transit peptide. One can recognise a 2Fe-2S ferredoxin-type domain in the interval 68-170 (VNVVFVDRSG…GAEFTLPKIT (103 aa)). Residues cysteine 105, cysteine 111, cysteine 114, and cysteine 151 each coordinate [2Fe-2S] cluster.

It belongs to the adrenodoxin/putidaredoxin family. As to quaternary structure, component of the mitochondrial core iron-sulfur cluster (ISC) complex composed of NFS1, LYRM4, NDUFAB1, ISCU, FXN, and FDX2; this complex is a heterohexamer containing two copies of each monomer. Form a heterodimer complex with NFS1. Interacts (in both their reduced and oxidized states) with the cysteine desulfurase (NFS1:LYRM4) complex; this interaction stimulates cysteine desulfurase activity, and serves as a reductant for Fe-S cluster assembly. [2Fe-2S] cluster is required as a cofactor.

Its subcellular location is the mitochondrion. It localises to the mitochondrion matrix. Its function is as follows. Electron donor, of the core iron-sulfur cluster (ISC) assembly complex, that acts to reduce the persulfide into sulfide during [2Fe-2S] clusters assembly on the scaffolding protein ISCU. The core iron-sulfur cluster (ISC) assembly complex is involved in the de novo synthesis of a [2Fe-2S] cluster, the first step of the mitochondrial iron-sulfur protein biogenesis. This process is initiated by the cysteine desulfurase complex (NFS1:LYRM4:NDUFAB1) that produces persulfide which is delivered on the scaffold protein ISCU in a FXN-dependent manner. Then this complex is stabilized by FDX2 which provides reducing equivalents to accomplish the [2Fe-2S] cluster assembly. Finally, the [2Fe-2S] cluster is transferred from ISCU to chaperone proteins, including HSCB, HSPA9 and GLRX5. Essential for coenzyme Q biosynthesis: together with FDXR, transfers the electrons required for the hydroxylation reaction performed by COQ6. The polypeptide is Ferredoxin-2, mitochondrial (Bos taurus (Bovine)).